Consider the following 2455-residue polypeptide: MATLEKPKKEKSKKSRNRVPIEKEEEEPAELSTSEEQRPAENVSLLEEFERVATLASSSSGEAIISHECCISSDVGVTSQEPEGTQEPTETEAQPSAPSAPPSTTVHVVQYPNLQPMQLSNAQVEEHSAKIVYRQAESPTGFALARSHIKLLSTEELRQIYDCPELELAKQFELEFLMNSLLETSEADPLYAAVMEYYELQGKITSNLHDVEKLRKGCAESQKQIWVRQPVTRTFSGTCGDGNVVQECVTYDVIQVDPIKLEVAKTSLTGLYDLVCHAYTNNSITAKITKVKVDQIINDLLTYPNLDGHSVVSLHHTQSGEALQCVSQLRRAISILFSFVRRPSPNANFDKDLKEWLRKLIALQLLLATREDHWFLLFNILRCPNGVGSWAAQFLQLPGTRAVRRGSQQNELPLDLNSPELNHCMAVLQILLMPVKKRNEYLKSQAQAHRELSDTPGATDRWIVVDSDGEDSHTPAGECVGLKESDLVALLNQMPFEKIFTSALRIEKFLDDYIIEPDMITAQQMLAVVVFFSQLVKTIGEGLLTYNNERYKQLAKRLGRLVRHTLQYVFDYNELFINNNLYKSSEMYERIQVELQALLVRACGYIYRTRNLGTWQYFSTLPFGTLDAEVIWHLFYYLNVGFPTDLANDLVSNAEAAFQAEDFWRKFDLANADVAPEDMYYLLQTFFEMANERNRSKDGSLVKAICLHIFHIGYIHKSTREICYKTARDMLANLMDEDLFGCVLVQLKMRYGEVDQAAYLFKALPLENWHPSMDTFEVLSNWLLHFDYQSSESQLARLIISHLNWGLDCEGRLFLPHNIHVRMAHLVNEALNKYAPEVIGASGISESVRQVSSLIDSTQSSREQFTNWCWRMVSVLRLHLMDQGVESVRRTLQHPTEPLLFIPELERMEMIFQGVNENRPLALYVGMLVSLHGHSIPLICQHGFILLQQLLLDHRHAATIRCLELIVPLFLETPETLANCESFQRLITTLLNADRTYLKLAKDMVYANSIGPILELLDNMLHHQIISYTSYGLCSPLNLLNIWLNCFTTLPGWSQNSNLLYLLDRMLRISYQFPDCRAQAVEFFYNYYKDCTEWKSAPKGSALKAFFGGQSVSRIPLISPQNCWLNLVILEIEFRLVDTRIFPELLRQISAQPVEAALKKTISLSKTSAFPASQLVIFKYAQLLASMESTHALFPIVCQKFFELYLWRVPTENESLNFSHNFGVSDKFYEYNVPLMKSIKSQLKSAESYYSALATKNANDDAMAHFYRNCCKLMQNCALWLEDTQINRFTSDAEHLPAQYNSEKLRELLSGHVNHWTEFLCLASLRKEQRHQADQWGRKVMRLSNQKAPRTPVQPKQRQPPAQHIKSLLKSYEKIVENPLHIRVEPIKTPPIDGVIVAQIQKKMTTLNSTANNYHYKTSELNSLDLNYLERVPTLYSMIPYEETRRKECTSLLFKRNCTAPAQIKLTPEHIRINDVISRKQAQNRERHDKIIEDILLAMSVESFAQAIEELGVCIGALLVAPLESSVTQIGVRVFYDIVDNLNEVTMKFQPTHDLYFQVLEKLGVFLEADQAAQGLAILRLALKRPDLLELLAGVFVPSRTDVDHFLSMYEFLIDSHLKHCDTQTLFVLFSKFDLLGWMEAYQPKLSEINRLLLLVLQGLEAWSQPDSSLLQDLFRRHLVHIFGYDFPQHYGEVMQLVLDRTSDQKLMPVVLLDLLNALFVRSNCAELSLQQSEVRVHELALDFARRQKLFTLKAATDTLLLLSRHFQKERLHHGLHGLYPKHKDYCQALVLWFTSFGHTLLASAICSYQELLADQISDIVFGSIVETYSPWLIPYTEETVSGVAHWIRQLTPGQSKVLLPWSEQHVSSCKLMIRSFVATIIQVLQYLPSSNKILEHVFAWYVHHFAQSSTTGHVLAPIHEGLAQLPWERFLPPAQHVELLYDSLQKFLPESHAMLGHIFIRIEWNNWFAQMPQPVSILSRLFTIFVKIAFEPNIHIHPNTSKILEDAIRYPWHLVECSELEQLLKWFVASVEPAIALKIPAESNYADRAVLELLRLACAMLPERSAQDAVVLGTAKRMLYTRSMVRMQRACGAKHQKLLATKEGERAFSNAFLELLDSIDGAISSCSEHRTMEEQRREALNLMLELVAPTQTQSQEVSNIHIKALVWWQQRCSPGNLVMCSTLPAIGHLNTYIASIYSLLEASIENYFRTSPEIASWHAPSWQGLMEALSMSLPKLDLMPIMQGSYFFSLHVFVLYKMEEIATDGDKVTFLQDLSQLLENLKTSPQTEPRMALVWGVIIARGCQIAQVNQQVKKPLHMLARHLQIASTKAEGWGDGLLGVIGLKSEVITNRRKVLTRCLACVIFSLFPANRDLRIPSEEYESALRELSMLLANKKFTDIKPLIVRAVSLLKESTFPDIRAVPHMVCRLISIFYEESYLTTIPEVWDFEFKLMAT.

The disordered stretch occupies residues 1-42; the sequence is MATLEKPKKEKSKKSRNRVPIEKEEEEPAELSTSEEQRPAEN. Serine 44 carries the phosphoserine modification. A disordered region spans residues 77–105; sequence VTSQEPEGTQEPTETEAQPSAPSAPPSTT. Positions 80–97 are enriched in low complexity; sequence QEPEGTQEPTETEAQPSA. Serine 467 carries the post-translational modification Phosphoserine.

Belongs to the EPG5 family.

Its subcellular location is the cytoplasm. The protein localises to the perinuclear region. The protein resides in the lysosome. Functionally, involved in autophagy. Plays a role in late steps of autophagy. The chain is Ectopic P granules protein 5 homolog from Drosophila melanogaster (Fruit fly).